Consider the following 33-residue polypeptide: MNIELIVQLTSLALITLAGPLIVALLFLKQGNL.

The helical transmembrane segment at 5 to 25 (LIVQLTSLALITLAGPLIVAL) threads the bilayer.

Belongs to the Psb30/Ycf12 family. PSII is composed of 1 copy each of membrane proteins PsbA, PsbB, PsbC, PsbD, PsbE, PsbF, PsbH, PsbI, PsbJ, PsbK, PsbL, PsbM, PsbT, PsbY, PsbZ, Psb30/Ycf12, peripheral proteins of the oxygen-evolving complex and a large number of cofactors. It forms dimeric complexes.

The protein resides in the plastid. The protein localises to the chloroplast thylakoid membrane. Functionally, a core subunit of photosystem II (PSII), probably helps stabilize the reaction center. The protein is Photosystem II reaction center protein Psb30 of Euglena sanguinea.